Here is a 345-residue protein sequence, read N- to C-terminus: Phenylalanine--tRNA ligase alpha subunit (345 aa).

Glu259 contributes to the Mg(2+) binding site.

It belongs to the class-II aminoacyl-tRNA synthetase family. Phe-tRNA synthetase alpha subunit type 1 subfamily. Tetramer of two alpha and two beta subunits. Mg(2+) serves as cofactor.

Its subcellular location is the cytoplasm. It catalyses the reaction tRNA(Phe) + L-phenylalanine + ATP = L-phenylalanyl-tRNA(Phe) + AMP + diphosphate + H(+). This Lactococcus lactis subsp. cremoris (strain SK11) protein is Phenylalanine--tRNA ligase alpha subunit.